Reading from the N-terminus, the 767-residue chain is 5-methyltetrahydropteroyltriglutamate--homocysteine methyltransferase (767 aa).

Residues 17–20 (RELK) and Lys117 contribute to the 5-methyltetrahydropteroyltri-L-glutamate site. L-homocysteine contacts are provided by residues 441-443 (IGS) and Glu494. L-methionine contacts are provided by residues 441 to 443 (IGS) and Glu494. 5-methyltetrahydropteroyltri-L-glutamate is bound by residues 525–526 (RC) and Trp571. Asp609 is an L-homocysteine binding site. L-methionine is bound at residue Asp609. Position 615 (Glu615) interacts with 5-methyltetrahydropteroyltri-L-glutamate. Residues His652, Cys654, and Glu676 each contribute to the Zn(2+) site. Residue His705 is the Proton donor of the active site. Cys737 is a Zn(2+) binding site.

The protein belongs to the vitamin-B12 independent methionine synthase family. Requires Zn(2+) as cofactor.

It carries out the reaction 5-methyltetrahydropteroyltri-L-glutamate + L-homocysteine = tetrahydropteroyltri-L-glutamate + L-methionine. It functions in the pathway amino-acid biosynthesis; L-methionine biosynthesis via de novo pathway; L-methionine from L-homocysteine (MetE route): step 1/1. Its function is as follows. Catalyzes the transfer of a methyl group from 5-methyltetrahydrofolate to homocysteine resulting in methionine formation. The chain is 5-methyltetrahydropteroyltriglutamate--homocysteine methyltransferase from Bifidobacterium longum subsp. infantis (strain ATCC 15697 / DSM 20088 / JCM 1222 / NCTC 11817 / S12).